The sequence spans 384 residues: Spermidine/putrescine import ATP-binding protein PotA (384 aa).

In terms of domain architecture, ABC transporter spans 6 to 238 (ITFNNVSKTF…PINHFVANFI (233 aa)). ATP is bound at residue 40 to 47 (GASGSGKS).

This sequence belongs to the ABC transporter superfamily. Spermidine/putrescine importer (TC 3.A.1.11.1) family. In terms of assembly, the complex is composed of two ATP-binding proteins (PotA), two transmembrane proteins (PotB and PotC) and a solute-binding protein (PotD).

The protein resides in the cell membrane. It catalyses the reaction ATP + H2O + polyamine-[polyamine-binding protein]Side 1 = ADP + phosphate + polyamineSide 2 + [polyamine-binding protein]Side 1.. Functionally, part of the ABC transporter complex PotABCD involved in spermidine/putrescine import. Responsible for energy coupling to the transport system. The sequence is that of Spermidine/putrescine import ATP-binding protein PotA from Streptococcus pyogenes serotype M18 (strain MGAS8232).